A 185-amino-acid polypeptide reads, in one-letter code: Protein E3 homolog (185 aa).

Positions 7–73 constitute a Z-binding domain; it reads TVNDAEIFSL…SNPPKWFKNY (67 aa). The DRBM domain maps to 112 to 179; the sequence is NPCIVLNEYC…SKITMDEILD (68 aa).

Belongs to the poxviridae E3 protein family.

Functionally, RNA-binding protein that plays a role in the inhibition of multiple cellular antiviral responses activated by double-stranded RNA (dsRNA), such as inhibition of PKR activation, necroptosis, and IFN-mediated antiviral activities. Recognizes and binds Z-RNA structures via its Z-binding domain and dsRNA via its DRBM domain: RNA-binding activity is required to escape host ZBP1-dependent necroptosis. Mechanistically, the Z-binding domain binds Z-RNAs that are produced during Yaba-like disease virus infection, thereby competing with Z-RNA detection by host ZBP1, suppressing ZBP1-dependent necroptosis. The chain is Protein E3 homolog from Yaba-like disease virus (YLDV).